The primary structure comprises 256 residues: Imidazole glycerol phosphate synthase subunit HisF (256 aa).

Active-site residues include Asp-12 and Asp-131.

It belongs to the HisA/HisF family. In terms of assembly, heterodimer of HisH and HisF.

It is found in the cytoplasm. The enzyme catalyses 5-[(5-phospho-1-deoxy-D-ribulos-1-ylimino)methylamino]-1-(5-phospho-beta-D-ribosyl)imidazole-4-carboxamide + L-glutamine = D-erythro-1-(imidazol-4-yl)glycerol 3-phosphate + 5-amino-1-(5-phospho-beta-D-ribosyl)imidazole-4-carboxamide + L-glutamate + H(+). It functions in the pathway amino-acid biosynthesis; L-histidine biosynthesis; L-histidine from 5-phospho-alpha-D-ribose 1-diphosphate: step 5/9. IGPS catalyzes the conversion of PRFAR and glutamine to IGP, AICAR and glutamate. The HisF subunit catalyzes the cyclization activity that produces IGP and AICAR from PRFAR using the ammonia provided by the HisH subunit. The sequence is that of Imidazole glycerol phosphate synthase subunit HisF from Pseudomonas syringae pv. tomato (strain ATCC BAA-871 / DC3000).